The following is a 213-amino-acid chain: Hemolysin-3 homolog (213 aa).

Helical transmembrane passes span 11 to 31 (AITH…LIIF), 41 to 61 (IVSF…STLL), 75 to 95 (IIDH…FLLG), 103 to 123 (FTLL…KIFF), 127 to 147 (FILL…IAVK), 157 to 177 (GFSL…FYIW), and 185 to 205 (AIWH…VLFY).

This sequence belongs to the UPF0073 (Hly-III) family.

The protein resides in the cell membrane. In Bacillus subtilis (strain 168), this protein is Hemolysin-3 homolog (yplQ).